We begin with the raw amino-acid sequence, 509 residues long: Solute carrier family 2, facilitated glucose transporter member 4 (509 aa).

Residues 1–23 lie on the Cytoplasmic side of the membrane; that stretch reads MPSGFQQIGSDDGEPPRQRVTGT. Residues 7-13 form an interaction with SRFBP1 region; it reads QIGSDDG. Residue Ser-10 is modified to Phosphoserine. Residues 24-44 traverse the membrane as a helical segment; the sequence is LVLAVFSAVLGSLQFGYNIGV. The Extracellular portion of the chain corresponds to 45 to 80; sequence INAPQKVIEQSYNATWLGRQGPGGPDSIPQGTLTTL. N-linked (GlcNAc...) asparagine glycosylation is present at Asn-57. A helical transmembrane segment spans residues 81 to 101; that stretch reads WALSVAIFSVGGMISSFLIGI. Residues 102 to 110 are Cytoplasmic-facing; the sequence is ISQWLGRKR. A helical membrane pass occupies residues 111 to 131; that stretch reads AMLANNVLAVLGGALMGLANA. Over 132–141 the chain is Extracellular; it reads AASYEILILG. Residues 142-162 form a helical membrane-spanning segment; sequence RFLIGAYSGLTSGLVPMYVGE. The Cytoplasmic segment spans residues 163–170; the sequence is IAPTHLRG. The chain crosses the membrane as a helical span at residues 171–191; it reads ALGTLNQLAIVIGILVAQVLG. Gln-177 is a binding site for D-glucose. Residues 192–200 are Extracellular-facing; it reads LESMLGTAT. Residues 201-221 form a helical membrane-spanning segment; the sequence is LWPLLLALTVLPALLQLILLP. The Cytoplasmic segment spans residues 222 to 286; it reads FCPESPRYLY…QLLGSRTHRQ (65 aa). Cys-223 carries S-palmitoyl cysteine lipidation. At Ser-274 the chain carries Phosphoserine; by SGK1. The chain crosses the membrane as a helical span at residues 287–307; sequence PLIIAVVLQLSQQLSGINAVF. D-glucose is bound by residues 298-299 and Asn-304; that span reads QQ. Topologically, residues 308–322 are extracellular; sequence YYSTSIFESAGVGQP. Residues 323-343 traverse the membrane as a helical segment; it reads AYATIGAGVVNTVFTLVSVLL. Asn-333 is a D-glucose binding site. Residues 344–352 lie on the Cytoplasmic side of the membrane; the sequence is VERAGRRTL. The helical transmembrane segment at 353–373 threads the bilayer; that stretch reads HLLGLAGMCGCAILMTVALLL. Residues 374–384 lie on the Extracellular side of the membrane; sequence LERVPAMSYVS. The chain crosses the membrane as a helical span at residues 385–405; that stretch reads IVAIFGFVAFFEIGPGPIPWF. D-glucose-binding residues include Glu-396 and Trp-404. The Cytoplasmic portion of the chain corresponds to 406–416; it reads IVAELFSQGPR. A helical transmembrane segment spans residues 417 to 437; it reads PAAMAVAGFSNWTCNFIVGMG. The Extracellular segment spans residues 438–444; it reads FQYVADA. Residues 445-465 traverse the membrane as a helical segment; that stretch reads MGPYVFLLFAVLLLGFFIFTF. Over 466-508 the chain is Cytoplasmic; it reads LKVPETRGRTFDQISAAFRRTPSLLEQEVKPSTELEYLGPDEN. Thr-486 is modified (phosphothreonine). At Ser-488 the chain carries Phosphoserine. The short motif at 489–490 is the Dileucine internalization motif element; that stretch reads LL.

Belongs to the major facilitator superfamily. Sugar transporter (TC 2.A.1.1) family. Glucose transporter subfamily. As to quaternary structure, binds to DAXX. Interacts via its N-terminus with SRFBP1. Interacts with NDUFA9. Interacts with TRARG1; the interaction is required for proper SLC2A4 recycling after insulin stimulation. In terms of processing, sumoylated. Post-translationally, palmitoylated. Palmitoylation by ZDHHC7 controls the insulin-dependent translocation of GLUT4 to the plasma membrane. As to expression, expressed in skeletal and cardiac muscles. Expressed in brown and white adipose tissues.

Its subcellular location is the cell membrane. The protein localises to the endomembrane system. It is found in the cytoplasm. The protein resides in the perinuclear region. It carries out the reaction D-glucose(out) = D-glucose(in). Insulin-regulated facilitative glucose transporter, which plays a key role in removal of glucose from circulation. Response to insulin is regulated by its intracellular localization: in the absence of insulin, it is efficiently retained intracellularly within storage compartments in muscle and fat cells. Upon insulin stimulation, translocates from these compartments to the cell surface where it transports glucose from the extracellular milieu into the cell. In Mus musculus (Mouse), this protein is Solute carrier family 2, facilitated glucose transporter member 4.